Here is a 131-residue protein sequence, read N- to C-terminus: MPVTDSIADYLTRLRNAGQAKNKTTDIPYSTQKENISKLLVEKGYIKNYTVITSDRFPFIRVELKYGSNGTFAIKEITRVSKPGRRVYEGKDLRKYLGGLGLLILSTSKGILTDKEAREQGVGGEVLFRIL.

This sequence belongs to the universal ribosomal protein uS8 family. In terms of assembly, part of the 30S ribosomal subunit. Contacts proteins S5 and S12.

Its function is as follows. One of the primary rRNA binding proteins, it binds directly to 16S rRNA central domain where it helps coordinate assembly of the platform of the 30S subunit. The polypeptide is Small ribosomal subunit protein uS8 (Prosthecochloris aestuarii (strain DSM 271 / SK 413)).